An 84-amino-acid polypeptide reads, in one-letter code: Small ribosomal subunit protein uS17 (84 aa).

This sequence belongs to the universal ribosomal protein uS17 family. Part of the 30S ribosomal subunit.

In terms of biological role, one of the primary rRNA binding proteins, it binds specifically to the 5'-end of 16S ribosomal RNA. This is Small ribosomal subunit protein uS17 from Klebsiella pneumoniae subsp. pneumoniae (strain ATCC 700721 / MGH 78578).